We begin with the raw amino-acid sequence, 1405 residues long: DNA-directed RNA polymerase subunit beta' (1405 aa).

C70, C72, C85, and C88 together coordinate Zn(2+). Mg(2+) contacts are provided by D460, D462, and D464. Zn(2+)-binding residues include C815, C890, C897, and C900.

The protein belongs to the RNA polymerase beta' chain family. The RNAP catalytic core consists of 2 alpha, 1 beta, 1 beta' and 1 omega subunit. When a sigma factor is associated with the core the holoenzyme is formed, which can initiate transcription. Mg(2+) serves as cofactor. It depends on Zn(2+) as a cofactor.

The catalysed reaction is RNA(n) + a ribonucleoside 5'-triphosphate = RNA(n+1) + diphosphate. DNA-dependent RNA polymerase catalyzes the transcription of DNA into RNA using the four ribonucleoside triphosphates as substrates. This chain is DNA-directed RNA polymerase subunit beta', found in Xanthomonas campestris pv. campestris (strain 8004).